Consider the following 224-residue polypeptide: MVLLSKFDFSGNKIGEVEVADSLFADEGDGLQLIKDYIVAIRANKRQWSACTRNRSEVSHSTKKPFKQKGTGNARQGCLASPQFRGGGIVFGPKPKFNQHVRINRKERKAAIRLLLAQKIQTNKLTVVDDTVFVDALTAPKTQSALRFLKDCNVECRSILFIDHLDHVEKNENLRLSLRNLTAVKGFVYGININGYDLASAHNIVISKKALQELVERLVSETKD.

Positions 53–74 (RNRSEVSHSTKKPFKQKGTGNA) are disordered.

This sequence belongs to the universal ribosomal protein uL4 family. As to quaternary structure, part of the 50S ribosomal subunit.

One of the primary rRNA binding proteins, this protein initially binds near the 5'-end of the 23S rRNA. It is important during the early stages of 50S assembly. It makes multiple contacts with different domains of the 23S rRNA in the assembled 50S subunit and ribosome. Functionally, forms part of the polypeptide exit tunnel. The protein is Large ribosomal subunit protein uL4 of Chlamydia pneumoniae (Chlamydophila pneumoniae).